The following is a 341-amino-acid chain: Putative amino-acid ABC transporter-binding protein YhdW (341 aa).

The signal sequence occupies residues 1–19 (MKKMMIATLAAASVLLAVA).

This sequence belongs to the bacterial solute-binding protein 3 family.

The protein resides in the periplasm. Probably part of the binding-protein-dependent transport system YdhWXYZ for an amino acid. This chain is Putative amino-acid ABC transporter-binding protein YhdW (yhdW), found in Escherichia coli (strain K12).